The following is a 618-amino-acid chain: tRNA 5-methylaminomethyl-2-thiouridine biosynthesis bifunctional protein MnmC (618 aa).

Positions M1–E231 are tRNA (mnm(5)s(2)U34)-methyltransferase. Residues I256–N618 form an FAD-dependent cmnm(5)s(2)U34 oxidoreductase region.

It in the N-terminal section; belongs to the methyltransferase superfamily. tRNA (mnm(5)s(2)U34)-methyltransferase family. In the C-terminal section; belongs to the DAO family. Requires FAD as cofactor.

It localises to the cytoplasm. It catalyses the reaction 5-aminomethyl-2-thiouridine(34) in tRNA + S-adenosyl-L-methionine = 5-methylaminomethyl-2-thiouridine(34) in tRNA + S-adenosyl-L-homocysteine + H(+). Catalyzes the last two steps in the biosynthesis of 5-methylaminomethyl-2-thiouridine (mnm(5)s(2)U) at the wobble position (U34) in tRNA. Catalyzes the FAD-dependent demodification of cmnm(5)s(2)U34 to nm(5)s(2)U34, followed by the transfer of a methyl group from S-adenosyl-L-methionine to nm(5)s(2)U34, to form mnm(5)s(2)U34. This is tRNA 5-methylaminomethyl-2-thiouridine biosynthesis bifunctional protein MnmC from Dichelobacter nodosus (strain VCS1703A).